Here is a 379-residue protein sequence, read N- to C-terminus: Deoxyguanosinetriphosphate triphosphohydrolase-like protein (379 aa).

Positions 69 to 200 (RLTHTIEVAQ…ANLADEIAYS (132 aa)) constitute an HD domain.

It belongs to the dGTPase family. Type 2 subfamily.

The chain is Deoxyguanosinetriphosphate triphosphohydrolase-like protein from Azoarcus sp. (strain BH72).